Reading from the N-terminus, the 346-residue chain is Phosphoribosylformylglycinamidine cyclo-ligase (346 aa).

It belongs to the AIR synthase family.

The protein localises to the cytoplasm. It catalyses the reaction 2-formamido-N(1)-(5-O-phospho-beta-D-ribosyl)acetamidine + ATP = 5-amino-1-(5-phospho-beta-D-ribosyl)imidazole + ADP + phosphate + H(+). The protein operates within purine metabolism; IMP biosynthesis via de novo pathway; 5-amino-1-(5-phospho-D-ribosyl)imidazole from N(2)-formyl-N(1)-(5-phospho-D-ribosyl)glycinamide: step 2/2. The protein is Phosphoribosylformylglycinamidine cyclo-ligase of Shewanella piezotolerans (strain WP3 / JCM 13877).